The primary structure comprises 589 residues: Aspartate--tRNA ligase (589 aa).

Residue E174 coordinates L-aspartate. Residues 198 to 201 are aspartate; sequence QLFK. R220 provides a ligand contact to L-aspartate. Residues 220–222 and Q229 contribute to the ATP site; that span reads RDE. H448 provides a ligand contact to L-aspartate. E484 is an ATP binding site. Position 491 (R491) interacts with L-aspartate. Residue 536-539 coordinates ATP; the sequence is GLDR.

Belongs to the class-II aminoacyl-tRNA synthetase family. Type 1 subfamily. As to quaternary structure, homodimer.

The protein localises to the cytoplasm. It catalyses the reaction tRNA(Asp) + L-aspartate + ATP = L-aspartyl-tRNA(Asp) + AMP + diphosphate. Catalyzes the attachment of L-aspartate to tRNA(Asp) in a two-step reaction: L-aspartate is first activated by ATP to form Asp-AMP and then transferred to the acceptor end of tRNA(Asp). The polypeptide is Aspartate--tRNA ligase (Leuconostoc citreum (strain KM20)).